The primary structure comprises 35 residues: Thaumatin-like protein 6 (35 aa).

Belongs to the thaumatin family.

The polypeptide is Thaumatin-like protein 6 (Glebionis coronaria (Crown daisy)).